The sequence spans 472 residues: Endoplasmic reticulum oxidoreductin-2 (472 aa).

The N-terminal stretch at 1–37 (MAETDVGSVKGKEKGSGKRWILLIGAIAAVLLAVVVA) is a signal peptide. N-linked (GlcNAc...) asparagine glycosylation occurs at Asn-44. Cystine bridges form between Cys-55–Cys-74, Cys-57–Cys-72, Cys-111–Cys-371, Cys-120–Cys-125, Cys-221–Cys-230, and Cys-374–Cys-377. FAD-binding residues include Arg-200, Thr-202, and Trp-213. The FAD site is built by Ser-241 and His-244. Asn-267 carries an N-linked (GlcNAc...) asparagine glycan. Arg-274 and Arg-281 together coordinate FAD. N-linked (GlcNAc...) asparagine glycosylation occurs at Asn-364.

Belongs to the EROs family. As to quaternary structure, may function both as a monomer and a homodimer. The cofactor is FAD. N-glycosylated.

It localises to the endoplasmic reticulum membrane. Essential oxidoreductase that oxidizes proteins in the endoplasmic reticulum to produce disulfide bonds. Acts by oxidizing directly PDI isomerase through a direct disulfide exchange. Does not act as a direct oxidant of folding substrate, but relies on PDI to transfer oxidizing equivalent. Does not oxidize all PDI related proteins, suggesting that it can discriminate between PDI and related proteins. Its reoxidation probably involves electron transfer to molecular oxygen via FAD. Acts independently of glutathione. May be responsible for a significant proportion of reactive oxygen species (ROS) in the cell, thereby being a source of oxidative stress. This is Endoplasmic reticulum oxidoreductin-2 (AERO2) from Arabidopsis thaliana (Mouse-ear cress).